A 145-amino-acid polypeptide reads, in one-letter code: Peptide methionine sulfoxide reductase MsrB (145 aa).

One can recognise a MsrB domain in the interval 4-127 (KEELRQRIGD…NSAALKFIPY (124 aa)). Catalysis depends on C116, which acts as the Nucleophile.

The protein belongs to the MsrB Met sulfoxide reductase family.

The catalysed reaction is L-methionyl-[protein] + [thioredoxin]-disulfide + H2O = L-methionyl-(R)-S-oxide-[protein] + [thioredoxin]-dithiol. The sequence is that of Peptide methionine sulfoxide reductase MsrB from Streptococcus equi subsp. zooepidemicus (strain H70).